Consider the following 390-residue polypeptide: Phosphoprotein (390 aa).

T10 and T16 each carry phosphothreonine. Residues 54–65 (QKNIQHPTASHQ) show a composition bias toward polar residues. 2 disordered regions span residues 54–98 (QKNI…EPLF) and 144–183 (RTST…KERS). Residue S69 is modified to Phosphoserine. Phosphothreonine occurs at positions 91, 150, and 164. S187 carries the post-translational modification Phosphoserine. T249 carries the phosphothreonine modification. The residue at position 256 (S256) is a Phosphoserine. T257 and T281 each carry phosphothreonine. Residues S291 and S293 each carry the phosphoserine modification. T297 carries the phosphothreonine modification. Phosphoserine is present on residues S300 and S373. The interaction with the nucleoprotein stretch occupies residues 342–390 (AGRKVMITKMITDCVANPQMKQAFEQRLAKASTEDALNDIKKDIIRSAI). Position 374 is a phosphothreonine (T374).

Belongs to the rubulavirus/avulavirus P protein family. As to quaternary structure, homotetramer. Interacts (via multimerization domain) with polymerase L; this interaction forms the polymerase L-P complex. Interacts (via N-terminus) with N0 (via Ncore); this interaction allows P to chaperon N0 to avoid N polymerization before encapsidation. Interacts (via C-terminus) with N-RNA template; this interaction positions the polymerase on the template for both transcription and replication. Interacts with host RPS6KB1 kinase; this interaction may play a role in the viral replication and transcription.

Functionally, essential cofactor of the RNA polymerase L that plays a central role in the transcription and replication by forming the polymerase complex with RNA polymerase L and recruiting L to the genomic N-RNA template for RNA synthesis. Also plays a central role in the encapsidation of nascent RNA chains by forming the encapsidation complex with the nucleocapsid protein N (N-P complex). Acts as a chaperone for newly synthesized free N protein, so-called N0, allowing encapsidation of nascent RNA chains during replication. The nucleoprotein protein N prevents excessive phosphorylation of P, which leads to down-regulation of viral transcription/ replication. Participates, together with N, in the formation of viral factories (viroplasms), which are large inclusions in the host cytoplasm where replication takes place. The polypeptide is Phosphoprotein (P/V) (Homo sapiens (Human)).